An 84-amino-acid chain; its full sequence is Small ribosomal subunit protein bS18B (84 aa).

A compositionally biased stretch (basic residues) spans 1 to 10 (MAVKRAPSKK). The tract at residues 1–20 (MAVKRAPSKKVRAEQARRPK) is disordered.

This sequence belongs to the bacterial ribosomal protein bS18 family. As to quaternary structure, part of the 30S ribosomal subunit. Forms a tight heterodimer with protein bS6.

In terms of biological role, binds as a heterodimer with protein bS6 to the central domain of the 16S rRNA, where it helps stabilize the platform of the 30S subunit. This chain is Small ribosomal subunit protein bS18B, found in Nocardia farcinica (strain IFM 10152).